A 434-amino-acid polypeptide reads, in one-letter code: Mannose-6-phosphate isomerase (434 aa).

Zn(2+) is bound by residues glutamine 109, histidine 111, and glutamate 136. Positions 181–191 are enriched in polar residues; the sequence is SLGLPTSQPPD. Positions 181–200 are disordered; it reads SLGLPTSQPPDTSLFKPTES. Histidine 291 contacts Zn(2+). Residue arginine 310 is part of the active site.

The protein belongs to the mannose-6-phosphate isomerase type 1 family. Requires Zn(2+) as cofactor.

The protein localises to the cytoplasm. It catalyses the reaction D-mannose 6-phosphate = D-fructose 6-phosphate. The protein operates within nucleotide-sugar biosynthesis; GDP-alpha-D-mannose biosynthesis; alpha-D-mannose 1-phosphate from D-fructose 6-phosphate: step 1/2. In terms of biological role, involved in the synthesis of the GDP-mannose and dolichol-phosphate-mannose required for a number of critical mannosyl transfer reactions. The polypeptide is Mannose-6-phosphate isomerase (MAN1) (Cryptococcus neoformans var. neoformans serotype D (strain JEC21 / ATCC MYA-565) (Filobasidiella neoformans)).